We begin with the raw amino-acid sequence, 389 residues long: MLENLIKDFKEIFKYSGEVERFFSPGRVNLIGEHTDYNGGFVFPCALDFGTYAVVKKREDKTFKMYSKNFENLGIIEFNLDNLIYDKKDDWANYPKGVIKTFLDRNYKIDSGFDVLFFGNIPNGAGLSSSASIEVLTAVILKDLFKLDVDIIEMVKMCQVAENKFIGVNSGIMDQFAVGMGKKDNAILLDCNTLKYEYVPVKLVNMSIVIANTNKKRGLADSKYNERRTSCEEAVKVLNNNEVNIKYLGELTVTEFEKVKHYITDEEQLKRATHAVTENERAKIAVEFLKKDDIAEFGKLMNKSHTSLRDDYEVTGLELDSLVEAAWEEKGTVGSRMTGAGFGGCTVSIVENDYVDSFIKNVGKKYKEKTGLEASFYIANIGDGAGKVK.

Substrate is bound at residue 33–36 (EHTD). Residues serine 67 and 124-130 (GAGLSSS) each bind ATP. Positions 130 and 162 each coordinate Mg(2+). Residue aspartate 174 is the Proton acceptor of the active site. Tyrosine 224 contributes to the substrate binding site.

The protein belongs to the GHMP kinase family. GalK subfamily.

The protein localises to the cytoplasm. The catalysed reaction is alpha-D-galactose + ATP = alpha-D-galactose 1-phosphate + ADP + H(+). It participates in carbohydrate metabolism; galactose metabolism. Catalyzes the transfer of the gamma-phosphate of ATP to D-galactose to form alpha-D-galactose-1-phosphate (Gal-1-P). This chain is Galactokinase, found in Fusobacterium nucleatum subsp. nucleatum (strain ATCC 25586 / DSM 15643 / BCRC 10681 / CIP 101130 / JCM 8532 / KCTC 2640 / LMG 13131 / VPI 4355).